A 127-amino-acid chain; its full sequence is Protein translocase subunit SecE (127 aa).

Over 1-19 the chain is Cytoplasmic; the sequence is MSANTEAQGSGRGLEAMKW. The chain crosses the membrane as a helical span at residues 20–32; it reads VVVVALLLVAIVG. Topologically, residues 33–48 are periplasmic; sequence NYLYRDIMLPLRALAV. A helical membrane pass occupies residues 49 to 60; the sequence is VILIAAAGGVAL. Residues 61–97 are Cytoplasmic-facing; it reads LTTKGKATVAFAREARTEVRKVIWPTRQETLHTTLIV. The chain crosses the membrane as a helical span at residues 98–115; sequence AAVTAVMSLILWGLDGIL. Residues 116–127 lie on the Periplasmic side of the membrane; it reads VRLVSFITGLRF.

This sequence belongs to the SecE/SEC61-gamma family. As to quaternary structure, component of the Sec protein translocase complex. Heterotrimer consisting of SecY, SecE and SecG subunits. The heterotrimers can form oligomers, although 1 heterotrimer is thought to be able to translocate proteins. Interacts with the ribosome. Interacts with SecDF, and other proteins may be involved. Interacts with SecA.

The protein resides in the cell inner membrane. Its function is as follows. Essential subunit of the Sec protein translocation channel SecYEG. Clamps together the 2 halves of SecY. May contact the channel plug during translocation. The polypeptide is Protein translocase subunit SecE (Escherichia coli O157:H7).